Consider the following 230-residue polypeptide: Porin OmpL (230 aa).

The first 20 residues, 1-20 (MKSLNTLVILTSVISTSVFA), serve as a signal peptide directing secretion.

The protein belongs to the oligogalacturonate-specific porin KdgM (TC 1.B.35) family. OmpL subfamily.

The protein resides in the cell outer membrane. Its function is as follows. Outer membrane channel protein that allows an efficient diffusion of low-molecular-weight solutes such as small sugars and tetraglycine. However, the specific substrate recognized by the OmpL channel is unknown. In Salmonella typhimurium (strain LT2 / SGSC1412 / ATCC 700720), this protein is Porin OmpL (ompL).